The chain runs to 105 residues: MDTQDIVSEISELNLTYLMLAQQMLAKDRDAALFRLGISEELADILLTMSPAQIVKLASTNMLLCRFRFDDHAILGLVTQPHRDKGLQQSQMSILLARQAVEQIN.

The protein belongs to the FlhD family. As to quaternary structure, homodimer; disulfide-linked. Forms a heterohexamer composed of two FlhC and four FlhD subunits. Each FlhC binds a FlhD dimer, forming a heterotrimer, and a hexamer assembles by dimerization of two heterotrimers.

The protein localises to the cytoplasm. Functions in complex with FlhC as a master transcriptional regulator that regulates transcription of several flagellar and non-flagellar operons by binding to their promoter region. Activates expression of class 2 flagellar genes, including fliA, which is a flagellum-specific sigma factor that turns on the class 3 genes. Also regulates genes whose products function in a variety of physiological pathways. This Ralstonia nicotianae (strain ATCC BAA-1114 / GMI1000) (Ralstonia solanacearum) protein is Flagellar transcriptional regulator FlhD.